Consider the following 159-residue polypeptide: 6,7-dimethyl-8-ribityllumazine synthase (159 aa).

5-amino-6-(D-ribitylamino)uracil contacts are provided by residues Trp26, 57 to 59, and 79 to 81; these read ALE and CVV. (2S)-2-hydroxy-3-oxobutyl phosphate is bound at residue 84 to 85; that stretch reads GT. His87 serves as the catalytic Proton donor. Residue Asn112 participates in 5-amino-6-(D-ribitylamino)uracil binding. Arg126 serves as a coordination point for (2S)-2-hydroxy-3-oxobutyl phosphate.

The protein belongs to the DMRL synthase family.

It catalyses the reaction (2S)-2-hydroxy-3-oxobutyl phosphate + 5-amino-6-(D-ribitylamino)uracil = 6,7-dimethyl-8-(1-D-ribityl)lumazine + phosphate + 2 H2O + H(+). Its pathway is cofactor biosynthesis; riboflavin biosynthesis; riboflavin from 2-hydroxy-3-oxobutyl phosphate and 5-amino-6-(D-ribitylamino)uracil: step 1/2. Its function is as follows. Catalyzes the formation of 6,7-dimethyl-8-ribityllumazine by condensation of 5-amino-6-(D-ribitylamino)uracil with 3,4-dihydroxy-2-butanone 4-phosphate. This is the penultimate step in the biosynthesis of riboflavin. The polypeptide is 6,7-dimethyl-8-ribityllumazine synthase (Corynebacterium glutamicum (strain ATCC 13032 / DSM 20300 / JCM 1318 / BCRC 11384 / CCUG 27702 / LMG 3730 / NBRC 12168 / NCIMB 10025 / NRRL B-2784 / 534)).